Here is a 508-residue protein sequence, read N- to C-terminus: Photosystem II CP47 reaction center protein (508 aa).

A run of 6 helical transmembrane segments spans residues 21-36 (SVHI…WAGS), 101-115 (IVFS…IWHW), 140-156 (GIHL…FGAF), 203-218 (IAAG…FHLS), 237-252 (VLSS…AFVV), and 457-472 (SFAL…HGAR).

It belongs to the PsbB/PsbC family. PsbB subfamily. As to quaternary structure, PSII is composed of 1 copy each of membrane proteins PsbA, PsbB, PsbC, PsbD, PsbE, PsbF, PsbH, PsbI, PsbJ, PsbK, PsbL, PsbM, PsbT, PsbX, PsbY, PsbZ, Psb30/Ycf12, at least 3 peripheral proteins of the oxygen-evolving complex and a large number of cofactors. It forms dimeric complexes. Binds multiple chlorophylls. PSII binds additional chlorophylls, carotenoids and specific lipids. is required as a cofactor.

It localises to the plastid. The protein localises to the chloroplast thylakoid membrane. Functionally, one of the components of the core complex of photosystem II (PSII). It binds chlorophyll and helps catalyze the primary light-induced photochemical processes of PSII. PSII is a light-driven water:plastoquinone oxidoreductase, using light energy to abstract electrons from H(2)O, generating O(2) and a proton gradient subsequently used for ATP formation. In Acorus calamus var. americanus (American sweet flag), this protein is Photosystem II CP47 reaction center protein.